Consider the following 491-residue polypeptide: Cytosolic Fe-S cluster assembly factor NAR1 (491 aa).

8 residues coordinate [4Fe-4S] cluster: Cys-20, Cys-59, Cys-62, Cys-65, Cys-177, Cys-231, Cys-412, and Cys-416.

This sequence belongs to the NARF family. In terms of assembly, interacts with CIA1.

The protein localises to the cytoplasm. Its subcellular location is the nucleus. Essential component of a cytosolic Fe/S protein assembly machinery. Required for maturation of extramitochondrial Fe/S proteins. May play a role in the transfer of pre-assembled Fe/S clusters to target apoproteins. This Saccharomyces cerevisiae (strain ATCC 204508 / S288c) (Baker's yeast) protein is Cytosolic Fe-S cluster assembly factor NAR1 (NAR1).